We begin with the raw amino-acid sequence, 303 residues long: MSTLEQTIGNTPLVKLQRMGPDNGSEVWLKLEGNNPAGSVKDRAALSMIVEAEKRGEIKPGDVLIEATSGNTGIALAMIAALKGYRMKLLMPDNMSQERRAAMRAYGAELILVTKEQGMEGARDLALEMANRGEGKLLDQFNNPDNPYAHYTTTGPEIWQQTGGRITHFVSSMGTTGTITGVSRFMREQSKPVTIVGLQPEEGSSIPGIRRWPTEYLPGIFNASLVDEVLDIHQRDAENTMRELAVREGIFCGVSSGGAVAGALRVAKANPDAVVVAIICDRGDRYLSTGVFGEEHFSQGAGI.

Residue K41 is modified to N6-(pyridoxal phosphate)lysine. Pyridoxal 5'-phosphate is bound by residues N71, 174–178 (GTTGT), and S255.

It belongs to the cysteine synthase/cystathionine beta-synthase family. As to quaternary structure, homodimer. Pyridoxal 5'-phosphate is required as a cofactor.

The enzyme catalyses O-acetyl-L-serine + hydrogen sulfide = L-cysteine + acetate. It functions in the pathway amino-acid biosynthesis; L-cysteine biosynthesis; L-cysteine from L-serine: step 2/2. Two cysteine synthase enzymes are found. Both catalyze the same reaction. Cysteine synthase B can also use thiosulfate in place of sulfide to give cysteine thiosulfonate as a product. The protein is Cysteine synthase B (cysM) of Escherichia coli (strain K12).